We begin with the raw amino-acid sequence, 144 residues long: Large ribosomal subunit protein uL16 (144 aa).

Belongs to the universal ribosomal protein uL16 family. In terms of assembly, part of the 50S ribosomal subunit.

Binds 23S rRNA and is also seen to make contacts with the A and possibly P site tRNAs. The sequence is that of Large ribosomal subunit protein uL16 from Clostridium botulinum (strain Alaska E43 / Type E3).